A 139-amino-acid polypeptide reads, in one-letter code: D-ribose pyranase (139 aa).

Catalysis depends on histidine 20, which acts as the Proton donor. Substrate-binding positions include aspartate 28, histidine 106, and 128–130; that span reads YAN.

This sequence belongs to the RbsD / FucU family. RbsD subfamily. As to quaternary structure, homodecamer.

The protein resides in the cytoplasm. It catalyses the reaction beta-D-ribopyranose = beta-D-ribofuranose. It functions in the pathway carbohydrate metabolism; D-ribose degradation; D-ribose 5-phosphate from beta-D-ribopyranose: step 1/2. In terms of biological role, catalyzes the interconversion of beta-pyran and beta-furan forms of D-ribose. In Histophilus somni (strain 129Pt) (Haemophilus somnus), this protein is D-ribose pyranase.